The sequence spans 179 residues: Large ribosomal subunit protein uL5 (179 aa).

It belongs to the universal ribosomal protein uL5 family. In terms of assembly, part of the 50S ribosomal subunit; part of the 5S rRNA/L5/L18/L25 subcomplex. Contacts the 5S rRNA and the P site tRNA. Forms a bridge to the 30S subunit in the 70S ribosome.

Functionally, this is one of the proteins that bind and probably mediate the attachment of the 5S RNA into the large ribosomal subunit, where it forms part of the central protuberance. In the 70S ribosome it contacts protein S13 of the 30S subunit (bridge B1b), connecting the 2 subunits; this bridge is implicated in subunit movement. Contacts the P site tRNA; the 5S rRNA and some of its associated proteins might help stabilize positioning of ribosome-bound tRNAs. In Lysinibacillus sphaericus (strain C3-41), this protein is Large ribosomal subunit protein uL5.